The sequence spans 227 residues: Cytochrome c oxidase subunit 2 (227 aa).

Topologically, residues 1 to 14 (MAYPFQLGLQDATS) are mitochondrial intermembrane. The helical transmembrane segment at 15–45 (PIMEELLHFHDHTLMIVFLISSLVLYIITLM) threads the bilayer. Over 46–59 (LTTKLTHTSTMDAQ) the chain is Mitochondrial matrix. The chain crosses the membrane as a helical span at residues 60–87 (EVETVWTILPAIILILIALPSLRILYMM). Topologically, residues 88–227 (DEINNPSLTV…YFETWSAVMV (140 aa)) are mitochondrial intermembrane. Positions 161, 196, 198, 200, 204, and 207 each coordinate Cu cation. Residue Glu198 coordinates Mg(2+). Residue Tyr218 is modified to Phosphotyrosine.

This sequence belongs to the cytochrome c oxidase subunit 2 family. In terms of assembly, component of the cytochrome c oxidase (complex IV, CIV), a multisubunit enzyme composed of 14 subunits. The complex is composed of a catalytic core of 3 subunits MT-CO1, MT-CO2 and MT-CO3, encoded in the mitochondrial DNA, and 11 supernumerary subunits COX4I, COX5A, COX5B, COX6A, COX6B, COX6C, COX7A, COX7B, COX7C, COX8 and NDUFA4, which are encoded in the nuclear genome. The complex exists as a monomer or a dimer and forms supercomplexes (SCs) in the inner mitochondrial membrane with NADH-ubiquinone oxidoreductase (complex I, CI) and ubiquinol-cytochrome c oxidoreductase (cytochrome b-c1 complex, complex III, CIII), resulting in different assemblies (supercomplex SCI(1)III(2)IV(1) and megacomplex MCI(2)III(2)IV(2)). Found in a complex with TMEM177, COA6, COX18, COX20, SCO1 and SCO2. Interacts with TMEM177 in a COX20-dependent manner. Interacts with COX20. Interacts with COX16. Cu cation serves as cofactor.

The protein localises to the mitochondrion inner membrane. It carries out the reaction 4 Fe(II)-[cytochrome c] + O2 + 8 H(+)(in) = 4 Fe(III)-[cytochrome c] + 2 H2O + 4 H(+)(out). Its function is as follows. Component of the cytochrome c oxidase, the last enzyme in the mitochondrial electron transport chain which drives oxidative phosphorylation. The respiratory chain contains 3 multisubunit complexes succinate dehydrogenase (complex II, CII), ubiquinol-cytochrome c oxidoreductase (cytochrome b-c1 complex, complex III, CIII) and cytochrome c oxidase (complex IV, CIV), that cooperate to transfer electrons derived from NADH and succinate to molecular oxygen, creating an electrochemical gradient over the inner membrane that drives transmembrane transport and the ATP synthase. Cytochrome c oxidase is the component of the respiratory chain that catalyzes the reduction of oxygen to water. Electrons originating from reduced cytochrome c in the intermembrane space (IMS) are transferred via the dinuclear copper A center (CU(A)) of subunit 2 and heme A of subunit 1 to the active site in subunit 1, a binuclear center (BNC) formed by heme A3 and copper B (CU(B)). The BNC reduces molecular oxygen to 2 water molecules using 4 electrons from cytochrome c in the IMS and 4 protons from the mitochondrial matrix. This chain is Cytochrome c oxidase subunit 2 (MT-CO2), found in Vulpes vulpes (Red fox).